The sequence spans 280 residues: Bis(5'-nucleosyl)-tetraphosphatase, symmetrical (280 aa).

This sequence belongs to the Ap4A hydrolase family.

It catalyses the reaction P(1),P(4)-bis(5'-adenosyl) tetraphosphate + H2O = 2 ADP + 2 H(+). Its function is as follows. Hydrolyzes diadenosine 5',5'''-P1,P4-tetraphosphate to yield ADP. The sequence is that of Bis(5'-nucleosyl)-tetraphosphatase, symmetrical from Shigella boydii serotype 18 (strain CDC 3083-94 / BS512).